The primary structure comprises 413 residues: Tyrosine--tRNA ligase (413 aa).

The 'HIGH' region motif lies at 60–69 (PTAPDIHIGH). The 'KMSKS' region motif lies at 244 to 248 (KMSKS). Lys-247 lines the ATP pocket. In terms of domain architecture, S4 RNA-binding spans 352–412 (LGIAQLLKQA…GKRRFARVTL (61 aa)).

Belongs to the class-I aminoacyl-tRNA synthetase family. TyrS type 2 subfamily. As to quaternary structure, homodimer.

It localises to the cytoplasm. The catalysed reaction is tRNA(Tyr) + L-tyrosine + ATP = L-tyrosyl-tRNA(Tyr) + AMP + diphosphate + H(+). Its function is as follows. Catalyzes the attachment of tyrosine to tRNA(Tyr) in a two-step reaction: tyrosine is first activated by ATP to form Tyr-AMP and then transferred to the acceptor end of tRNA(Tyr). This Cupriavidus pinatubonensis (strain JMP 134 / LMG 1197) (Cupriavidus necator (strain JMP 134)) protein is Tyrosine--tRNA ligase.